The sequence spans 594 residues: Arginine--tRNA ligase (594 aa).

A 'HIGH' region motif is present at residues 133 to 143 (ANPTGPMNIVS).

The protein belongs to the class-I aminoacyl-tRNA synthetase family. In terms of assembly, monomer.

It localises to the cytoplasm. The catalysed reaction is tRNA(Arg) + L-arginine + ATP = L-arginyl-tRNA(Arg) + AMP + diphosphate. This is Arginine--tRNA ligase from Leptospira biflexa serovar Patoc (strain Patoc 1 / Ames).